Consider the following 291-residue polypeptide: Shikimate dehydrogenase (NADP(+)) (291 aa).

Residues 18-20 (SLS) and threonine 70 each bind shikimate. The Proton acceptor role is filled by lysine 74. Residues asparagine 95 and aspartate 110 each coordinate shikimate. Residues 134-138 (GAGGA) and valine 228 contribute to the NADP(+) site. Tyrosine 230 is a binding site for shikimate. Residue glycine 251 participates in NADP(+) binding.

The protein belongs to the shikimate dehydrogenase family. As to quaternary structure, homodimer.

The catalysed reaction is shikimate + NADP(+) = 3-dehydroshikimate + NADPH + H(+). The protein operates within metabolic intermediate biosynthesis; chorismate biosynthesis; chorismate from D-erythrose 4-phosphate and phosphoenolpyruvate: step 4/7. Its function is as follows. Involved in the biosynthesis of the chorismate, which leads to the biosynthesis of aromatic amino acids. Catalyzes the reversible NADPH linked reduction of 3-dehydroshikimate (DHSA) to yield shikimate (SA). The polypeptide is Shikimate dehydrogenase (NADP(+)) (Streptomyces avermitilis (strain ATCC 31267 / DSM 46492 / JCM 5070 / NBRC 14893 / NCIMB 12804 / NRRL 8165 / MA-4680)).